The sequence spans 192 residues: Probable protein adenylyltransferase y4lH (192 aa).

Positions 52-190 (LDFAHYRALH…LAPLAAEIRR (139 aa)) constitute a Fido domain. Residues 82–83 (KG) and 139–141 (GNG) each bind ATP.

It belongs to the fic family.

The enzyme catalyses L-tyrosyl-[protein] + ATP = O-(5'-adenylyl)-L-tyrosyl-[protein] + diphosphate. It catalyses the reaction L-threonyl-[protein] + ATP = 3-O-(5'-adenylyl)-L-threonyl-[protein] + diphosphate. Its function is as follows. Probable adenylyltransferase that mediates the addition of adenosine 5'-monophosphate (AMP) to specific residues of target proteins. The polypeptide is Probable protein adenylyltransferase y4lH (Sinorhizobium fredii (strain NBRC 101917 / NGR234)).